The sequence spans 245 residues: 3-deoxy-manno-octulosonate cytidylyltransferase (245 aa).

The protein belongs to the KdsB family.

Its subcellular location is the cytoplasm. It carries out the reaction 3-deoxy-alpha-D-manno-oct-2-ulosonate + CTP = CMP-3-deoxy-beta-D-manno-octulosonate + diphosphate. It functions in the pathway nucleotide-sugar biosynthesis; CMP-3-deoxy-D-manno-octulosonate biosynthesis; CMP-3-deoxy-D-manno-octulosonate from 3-deoxy-D-manno-octulosonate and CTP: step 1/1. Its pathway is bacterial outer membrane biogenesis; lipopolysaccharide biosynthesis. Activates KDO (a required 8-carbon sugar) for incorporation into bacterial lipopolysaccharide in Gram-negative bacteria. The chain is 3-deoxy-manno-octulosonate cytidylyltransferase from Acaryochloris marina (strain MBIC 11017).